We begin with the raw amino-acid sequence, 398 residues long: Phosphoglycerate kinase (398 aa).

Substrate-binding positions include 23–25, Arg-38, 61–64, Arg-122, and Arg-155; these read DFN and HMGK. ATP contacts are provided by residues Lys-206, Gly-297, Glu-328, and 354–357; that span reads GGDS.

It belongs to the phosphoglycerate kinase family. In terms of assembly, monomer.

It is found in the cytoplasm. It carries out the reaction (2R)-3-phosphoglycerate + ATP = (2R)-3-phospho-glyceroyl phosphate + ADP. It functions in the pathway carbohydrate degradation; glycolysis; pyruvate from D-glyceraldehyde 3-phosphate: step 2/5. In Clostridium botulinum (strain 657 / Type Ba4), this protein is Phosphoglycerate kinase.